Consider the following 328-residue polypeptide: GMP reductase (328 aa).

The Thioimidate intermediate role is filled by Cys177. Ile206–Val229 serves as a coordination point for NADP(+).

This sequence belongs to the IMPDH/GMPR family. GuaC type 2 subfamily.

The enzyme catalyses IMP + NH4(+) + NADP(+) = GMP + NADPH + 2 H(+). Catalyzes the irreversible NADPH-dependent deamination of GMP to IMP. It functions in the conversion of nucleobase, nucleoside and nucleotide derivatives of G to A nucleotides, and in maintaining the intracellular balance of A and G nucleotides. The sequence is that of GMP reductase from Levilactobacillus brevis (strain ATCC 367 / BCRC 12310 / CIP 105137 / JCM 1170 / LMG 11437 / NCIMB 947 / NCTC 947) (Lactobacillus brevis).